The primary structure comprises 161 residues: Transcriptional regulator MraZ (161 aa).

SpoVT-AbrB domains lie at 7–69 (KELH…EPDV) and 98–141 (LDVV…EPER).

It belongs to the MraZ family. As to quaternary structure, forms oligomers.

The protein localises to the cytoplasm. Its subcellular location is the nucleoid. The sequence is that of Transcriptional regulator MraZ from Chlorobium limicola (strain DSM 245 / NBRC 103803 / 6330).